An 820-amino-acid polypeptide reads, in one-letter code: Chitinase A (820 aa).

The signal sequence occupies residues 1 to 21 (MKLNKITSYIGFALLSGGALA). One can recognise a GH18 domain in the interval 158–588 (RVTGAYFVEW…NAMYDGLTAG (431 aa)). Catalysis depends on Glu-313, which acts as the Proton donor.

The protein belongs to the glycosyl hydrolase 18 family. Chitinase class II subfamily.

The catalysed reaction is Random endo-hydrolysis of N-acetyl-beta-D-glucosaminide (1-&gt;4)-beta-linkages in chitin and chitodextrins.. With respect to regulation, stimulated by magnesium ions; inhibited by N-bromosuccinimide and 2-hydroxy-5-nitrobenzyl bromide. This Pseudoalteromonas piscicida protein is Chitinase A (chiA).